We begin with the raw amino-acid sequence, 598 residues long: Jacalin-related lectin 17 (598 aa).

The interval 1-23 (MAQRLEAEGNKNFKGKSKWDDGS) is disordered. Jacalin-type lectin domains are found at residues 2–148 (AQRL…YVTW), 151–293 (PTKL…YFTT), 295–445 (PFTK…HFCP), and 452–595 (GEKV…HVLP).

This sequence belongs to the jacalin lectin family.

In Arabidopsis thaliana (Mouse-ear cress), this protein is Jacalin-related lectin 17 (JAL17).